The primary structure comprises 388 residues: 8-amino-7-oxononanoate synthase (388 aa).

Substrate is bound at residue arginine 20. 107-108 serves as a coordination point for pyridoxal 5'-phosphate; the sequence is GY. Histidine 132 serves as a coordination point for substrate. Residues serine 178, histidine 206, and threonine 237 each contribute to the pyridoxal 5'-phosphate site. An N6-(pyridoxal phosphate)lysine modification is found at lysine 240. A substrate-binding site is contributed by threonine 356.

Belongs to the class-II pyridoxal-phosphate-dependent aminotransferase family. BioF subfamily. In terms of assembly, homodimer. Requires pyridoxal 5'-phosphate as cofactor.

It catalyses the reaction 6-carboxyhexanoyl-[ACP] + L-alanine + H(+) = (8S)-8-amino-7-oxononanoate + holo-[ACP] + CO2. It functions in the pathway cofactor biosynthesis; biotin biosynthesis. Catalyzes the decarboxylative condensation of pimeloyl-[acyl-carrier protein] and L-alanine to produce 8-amino-7-oxononanoate (AON), [acyl-carrier protein], and carbon dioxide. This chain is 8-amino-7-oxononanoate synthase, found in Herminiimonas arsenicoxydans.